The primary structure comprises 252 residues: Petrobactin import ATP-binding protein YclP (252 aa).

One can recognise an ABC transporter domain in the interval valine 2–threonine 236. Glycine 34 to serine 41 is a binding site for ATP.

It belongs to the ABC transporter superfamily. The complex is composed of two ATP-binding proteins (YclP), two transmembrane proteins (YclN and YclO) and a solute-binding protein (YclQ).

It is found in the cell membrane. The enzyme catalyses a Fe(III)-siderophore(out) + ATP + H2O = a Fe(III)-siderophore(in) + ADP + phosphate + H(+). Its function is as follows. Part of the ABC transporter complex YclNOPQ involved in uptake of ferric-petrobactin. Petrobactin is a photoreactive 3,4-catecholate siderophore produced by many members of the B.cereus group, including B.anthracis. Probably responsible for energy coupling to the transport system. The protein is Petrobactin import ATP-binding protein YclP (yclP) of Bacillus subtilis (strain 168).